The chain runs to 468 residues: ATP synthase subunit beta 2 (468 aa).

ATP is bound at residue 155 to 162 (GGAGVGKT).

The protein belongs to the ATPase alpha/beta chains family. F-type ATPases have 2 components, CF(1) - the catalytic core - and CF(0) - the membrane proton channel. CF(1) has five subunits: alpha(3), beta(3), gamma(1), delta(1), epsilon(1). CF(0) has four main subunits: a(1), b(1), b'(1) and c(9-12).

The protein localises to the cell inner membrane. It catalyses the reaction ATP + H2O + 4 H(+)(in) = ADP + phosphate + 5 H(+)(out). Functionally, produces ATP from ADP in the presence of a proton gradient across the membrane. The catalytic sites are hosted primarily by the beta subunits. In Chlorobium luteolum (strain DSM 273 / BCRC 81028 / 2530) (Pelodictyon luteolum), this protein is ATP synthase subunit beta 2.